Reading from the N-terminus, the 92-residue chain is NELL2-interacting cell ontogeny regulator 1 (92 aa).

The first 30 residues, 1-30, serve as a signal peptide directing secretion; that stretch reads MALPSAWSVMRVVIPFISVLGLLGVRLVGA.

It belongs to the NICOL family.

It is found in the secreted. The protein resides in the cytoplasm. It localises to the perinuclear region. Functionally, mRNA-binding protein which interacts with a range of target mRNAs and may promote extracellular matrix production. May function as a component of lumicrine signaling and may play a crucial role in epididymal-mediated sperm maturation and male fertility. This is NELL2-interacting cell ontogeny regulator 1 from Gallus gallus (Chicken).